The following is a 183-amino-acid chain: Apo-citrate lyase phosphoribosyl-dephospho-CoA transferase (183 aa).

It belongs to the CitX family.

It carries out the reaction apo-[citrate lyase ACP] + 2'-(5''-triphospho-alpha-D-ribosyl)-3'-dephospho-CoA = holo-[citrate lyase ACP] + diphosphate. Transfers 2-(5''-triphosphoribosyl)-3'-dephosphocoenzyme-A on a serine residue to the apo-acyl carrier protein (gamma chain) of the citrate lyase to yield holo-acyl carrier protein. The chain is Apo-citrate lyase phosphoribosyl-dephospho-CoA transferase from Escherichia coli O9:H4 (strain HS).